The chain runs to 585 residues: CTP synthase (585 aa).

An amidoligase domain region spans residues 1–281; that stretch reads MPALRKHPHT…DAYVVRRLNL (281 aa). Residue serine 23 coordinates CTP. Residue serine 23 coordinates UTP. ATP is bound by residues 24–29 and aspartate 81; that span reads SLGKGL. The Mg(2+) site is built by aspartate 81 and glutamate 155. CTP is bound by residues 162–164, 202–207, and lysine 238; these read DIE and KTKPTQ. UTP-binding positions include 202-207 and lysine 238; that span reads KTKPTQ. Positions 306–554 constitute a Glutamine amidotransferase type-1 domain; that stretch reads RIALVGKYID…VGAAVEYNNG (249 aa). Glycine 369 contributes to the L-glutamine binding site. Cysteine 396 serves as the catalytic Nucleophile; for glutamine hydrolysis. Residues 397 to 400, glutamate 419, and arginine 480 contribute to the L-glutamine site; that span reads LGLQ. Residues histidine 527 and glutamate 529 contribute to the active site. The tract at residues 564–585 is disordered; it reads IPTADHQSNGAEHALEDAPARG. Over residues 576–585 the composition is skewed to basic and acidic residues; sequence HALEDAPARG.

The protein belongs to the CTP synthase family. Homotetramer.

The catalysed reaction is UTP + L-glutamine + ATP + H2O = CTP + L-glutamate + ADP + phosphate + 2 H(+). It catalyses the reaction L-glutamine + H2O = L-glutamate + NH4(+). The enzyme catalyses UTP + NH4(+) + ATP = CTP + ADP + phosphate + 2 H(+). It participates in pyrimidine metabolism; CTP biosynthesis via de novo pathway; CTP from UDP: step 2/2. With respect to regulation, allosterically activated by GTP, when glutamine is the substrate; GTP has no effect on the reaction when ammonia is the substrate. The allosteric effector GTP functions by stabilizing the protein conformation that binds the tetrahedral intermediate(s) formed during glutamine hydrolysis. Inhibited by the product CTP, via allosteric rather than competitive inhibition. Catalyzes the ATP-dependent amination of UTP to CTP with either L-glutamine or ammonia as the source of nitrogen. Regulates intracellular CTP levels through interactions with the four ribonucleotide triphosphates. The chain is CTP synthase from Mycolicibacterium gilvum (strain PYR-GCK) (Mycobacterium gilvum (strain PYR-GCK)).